A 513-amino-acid chain; its full sequence is Light-independent protochlorophyllide reductase subunit B (513 aa).

Asp36 is a binding site for [4Fe-4S] cluster. Asp299 acts as the Proton donor in catalysis. Position 434–435 (434–435 (GM)) interacts with substrate.

It belongs to the ChlB/BchB/BchZ family. Protochlorophyllide reductase is composed of three subunits; ChlL, ChlN and ChlB. Forms a heterotetramer of two ChlB and two ChlN subunits. [4Fe-4S] cluster serves as cofactor.

It is found in the plastid. It localises to the chloroplast. It carries out the reaction chlorophyllide a + oxidized 2[4Fe-4S]-[ferredoxin] + 2 ADP + 2 phosphate = protochlorophyllide a + reduced 2[4Fe-4S]-[ferredoxin] + 2 ATP + 2 H2O. It functions in the pathway porphyrin-containing compound metabolism; chlorophyll biosynthesis (light-independent). In terms of biological role, component of the dark-operative protochlorophyllide reductase (DPOR) that uses Mg-ATP and reduced ferredoxin to reduce ring D of protochlorophyllide (Pchlide) to form chlorophyllide a (Chlide). This reaction is light-independent. The NB-protein (ChlN-ChlB) is the catalytic component of the complex. This chain is Light-independent protochlorophyllide reductase subunit B, found in Zygnema circumcarinatum (Green alga).